The sequence spans 245 residues: MYPVDLHMHTVASTHAYSTLSDYIAQAKQKGIKLFAITDHGPDMEDAPHHWHFINMRIWPRVVDGVGILRGIEANIKNVDGEIDCSGKMFDSLDLIIAGFHEPVFAPHDKATNTKSMIATIASGNVHIISHPGNPRYPIDFKAVAEAAAKHQVALEINNSSFLHSRKGSEDNCRAVAAAVRDAGGWVALGSDSHTAFTMGEFEECLKILDAVDFPPERILNVSPRRLLNFLESRGMAPIAEFADL.

Positions 7, 9, 15, 40, 73, 101, 131, 192, and 194 each coordinate Zn(2+).

The protein belongs to the PHP family. Homotrimer. It depends on Zn(2+) as a cofactor.

This Escherichia coli O81 (strain ED1a) protein is Probable phosphatase YcdX.